The following is a 169-amino-acid chain: Endoribonuclease YbeY (169 aa).

3 residues coordinate Zn(2+): H117, H121, and H127.

It belongs to the endoribonuclease YbeY family. Zn(2+) serves as cofactor.

The protein localises to the cytoplasm. In terms of biological role, single strand-specific metallo-endoribonuclease involved in late-stage 70S ribosome quality control and in maturation of the 3' terminus of the 16S rRNA. The sequence is that of Endoribonuclease YbeY from Mesoplasma florum (strain ATCC 33453 / NBRC 100688 / NCTC 11704 / L1) (Acholeplasma florum).